The sequence spans 375 residues: Growth/differentiation factor 8 (375 aa).

The signal sequence occupies residues 1-23 (MQKIVVYVYIYLFVQISVDPVAL). Residues 24–266 (DGSSQPTENT…VTDTPKRSRR (243 aa)) constitute a propeptide that is removed on maturation. Asn71 carries N-linked (GlcNAc...) asparagine glycosylation. 4 disulfide bridges follow: Cys272–Cys282, Cys281–Cys340, Cys309–Cys372, and Cys313–Cys374.

This sequence belongs to the TGF-beta family. As to quaternary structure, homodimer; disulfide-linked.

The protein resides in the secreted. Functionally, acts specifically as a negative regulator of skeletal muscle growth. The polypeptide is Growth/differentiation factor 8 (MSTN) (Coturnix coturnix (Common quail)).